The primary structure comprises 341 residues: Phosphoribosylformylglycinamidine cyclo-ligase (341 aa).

It belongs to the AIR synthase family.

It localises to the cytoplasm. The catalysed reaction is 2-formamido-N(1)-(5-O-phospho-beta-D-ribosyl)acetamidine + ATP = 5-amino-1-(5-phospho-beta-D-ribosyl)imidazole + ADP + phosphate + H(+). The protein operates within purine metabolism; IMP biosynthesis via de novo pathway; 5-amino-1-(5-phospho-D-ribosyl)imidazole from N(2)-formyl-N(1)-(5-phospho-D-ribosyl)glycinamide: step 2/2. The polypeptide is Phosphoribosylformylglycinamidine cyclo-ligase (Alkaliphilus oremlandii (strain OhILAs) (Clostridium oremlandii (strain OhILAs))).